A 434-amino-acid chain; its full sequence is MDYLDLGPYSSASGTVRLPGSKSISNRVLLLAALAEGDTTITNLLDSDDTRVMLDALGKLGVKLARDGDTCVVTGTRGAFTAKTADLFLGNAGTAVRPLTAALAINGGDYRVHGVPRMHERPIGDLVDGLRQIGAQIDYEQNEGFPPLRIKPGTISVDAPIRVRGDVSSQFLTALLMTLPLVKAKDGRTVVEIDGELISKPYIDITIRLMERFGVTVERDGWQRFVVPAGVRYRSPGRIMVEGDASSASYFLAAGALGGGPLRVEGVGRASIQGDVGFANALMQMGANVSMGDDWIEVRGIGHDHGKLDPIDMDFNLIPDAAMTIAVAALFASGTSTLRNIASWRVKETDRIAAMATELRKVGAIVEEGADYLVVTPPQRLTPNAAIDTYDDHRMAMCFSLVSLGGVPVRINDPKCVGKTFPDYFNRFAALAKA.

Residues Lys-22, Ser-23, and Arg-27 each contribute to the 3-phosphoshikimate site. Lys-22 serves as a coordination point for phosphoenolpyruvate. 2 residues coordinate phosphoenolpyruvate: Gly-93 and Arg-121. The 3-phosphoshikimate site is built by Ser-168, Ser-169, Gln-170, Ser-199, Asp-320, and Lys-347. Phosphoenolpyruvate is bound at residue Gln-170. The active-site Proton acceptor is the Asp-320. Residues Arg-351, Arg-394, and Lys-419 each contribute to the phosphoenolpyruvate site.

This sequence belongs to the EPSP synthase family. In terms of assembly, monomer.

The protein resides in the cytoplasm. The catalysed reaction is 3-phosphoshikimate + phosphoenolpyruvate = 5-O-(1-carboxyvinyl)-3-phosphoshikimate + phosphate. It participates in metabolic intermediate biosynthesis; chorismate biosynthesis; chorismate from D-erythrose 4-phosphate and phosphoenolpyruvate: step 6/7. Catalyzes the transfer of the enolpyruvyl moiety of phosphoenolpyruvate (PEP) to the 5-hydroxyl of shikimate-3-phosphate (S3P) to produce enolpyruvyl shikimate-3-phosphate and inorganic phosphate. In Burkholderia ambifaria (strain ATCC BAA-244 / DSM 16087 / CCUG 44356 / LMG 19182 / AMMD) (Burkholderia cepacia (strain AMMD)), this protein is 3-phosphoshikimate 1-carboxyvinyltransferase.